The chain runs to 178 residues: Large ribosomal subunit protein uL6 (178 aa).

Belongs to the universal ribosomal protein uL6 family. In terms of assembly, part of the 50S ribosomal subunit.

Functionally, this protein binds to the 23S rRNA, and is important in its secondary structure. It is located near the subunit interface in the base of the L7/L12 stalk, and near the tRNA binding site of the peptidyltransferase center. In Francisella tularensis subsp. mediasiatica (strain FSC147), this protein is Large ribosomal subunit protein uL6.